A 317-amino-acid polypeptide reads, in one-letter code: MAKAPAKKFSGGAQRESAGGEQRKTAVFKMNTDLGQHILKNPLVAQGIVDKSDIKPSDTVLEVGPGTGNLTVRILEKARKVIAVEMDPRMAAELTKRVQGKPEQKKLEIMLGDCIKTELPYFDVCISNTPYQISSPLVFKLLNQPRPPRVSVLMFQHEFAMRLLARPGDSLYCRLSVNVQMWAKVSHVMKVGRGNFRPPPNVESSVVKIEVKNPRPPIDFNEWDGLLRVCFVRKNKTINAGFKTSAVLAVLEKNYQTWLSTQGEIIPEGSNLSDVVKQKINKILTDTGIGEMRSAKCDQTEFLTLLNEFHKAGIYFA.

Residues 1–22 are disordered; that stretch reads MAKAPAKKFSGGAQRESAGGEQ. S-adenosyl-L-methionine is bound by residues His37, Leu39, Gly64, Glu85, Asp113, and Asn128.

It belongs to the class I-like SAM-binding methyltransferase superfamily. rRNA adenine N(6)-methyltransferase family.

It catalyses the reaction adenosine(1779)/adenosine(1780) in 18S rRNA + 4 S-adenosyl-L-methionine = N(6)-dimethyladenosine(1779)/N(6)-dimethyladenosine(1780) in 18S rRNA + 4 S-adenosyl-L-homocysteine + 4 H(+). Functionally, specifically dimethylates two adjacent adenosines in the loop of a conserved hairpin near the 3'-end of 18S rRNA in the 40S particle. The protein is Dimethyladenosine transferase (DIM1) of Yarrowia lipolytica (strain CLIB 122 / E 150) (Yeast).